The chain runs to 347 residues: Eukaryotic translation initiation factor 3 subunit I (347 aa).

WD repeat units lie at residues 8–47 (GHERPLTQVKYNKEGDLLFSCSKDSSASVWYSLNGERLGT), 50–89 (GHTGTIWSIDVDCFTKYCVTGSADYSIKLWDVSNGQCVAT), 149–190 (THEG…EYVD), 194–233 (LHEKSISDMQFSPDLTYFITSSRDTNSFLVDVSTLQVLKK), and 291–330 (GHFGPLNTVAISPQGTSYASGGEDGFIRLHHFEKSYFDFK). Serine 302 carries the post-translational modification Phosphoserine.

Belongs to the eIF-3 subunit I family. Component of the eukaryotic translation initiation factor 3 (eIF-3) complex.

It is found in the cytoplasm. Its function is as follows. Component of the eukaryotic translation initiation factor 3 (eIF-3) complex, which is involved in protein synthesis of a specialized repertoire of mRNAs and, together with other initiation factors, stimulates binding of mRNA and methionyl-tRNAi to the 40S ribosome. The eIF-3 complex specifically targets and initiates translation of a subset of mRNAs involved in cell proliferation. This Saccharomyces cerevisiae (strain YJM789) (Baker's yeast) protein is Eukaryotic translation initiation factor 3 subunit I.